A 140-amino-acid chain; its full sequence is Large ribosomal subunit protein bL17 (140 aa).

This sequence belongs to the bacterial ribosomal protein bL17 family. As to quaternary structure, part of the 50S ribosomal subunit. Contacts protein L32.

In Paracoccus denitrificans (strain Pd 1222), this protein is Large ribosomal subunit protein bL17.